Reading from the N-terminus, the 248-residue chain is 3-deoxy-manno-octulosonate cytidylyltransferase (248 aa).

It belongs to the KdsB family.

It localises to the cytoplasm. It catalyses the reaction 3-deoxy-alpha-D-manno-oct-2-ulosonate + CTP = CMP-3-deoxy-beta-D-manno-octulosonate + diphosphate. It participates in nucleotide-sugar biosynthesis; CMP-3-deoxy-D-manno-octulosonate biosynthesis; CMP-3-deoxy-D-manno-octulosonate from 3-deoxy-D-manno-octulosonate and CTP: step 1/1. Its pathway is bacterial outer membrane biogenesis; lipopolysaccharide biosynthesis. Its function is as follows. Activates KDO (a required 8-carbon sugar) for incorporation into bacterial lipopolysaccharide in Gram-negative bacteria. This chain is 3-deoxy-manno-octulosonate cytidylyltransferase, found in Salmonella typhi.